The sequence spans 260 residues: Pyridoxine 5'-phosphate synthase (260 aa).

3-amino-2-oxopropyl phosphate-binding residues include Asn10 and Arg21. His46 acts as the Proton acceptor in catalysis. 2 residues coordinate 1-deoxy-D-xylulose 5-phosphate: Arg48 and His53. The Proton acceptor role is filled by Glu76. Thr113 serves as a coordination point for 1-deoxy-D-xylulose 5-phosphate. His204 functions as the Proton donor in the catalytic mechanism. 3-amino-2-oxopropyl phosphate-binding positions include Asp205 and 227 to 228 (GH).

The protein belongs to the PNP synthase family. As to quaternary structure, homooctamer; tetramer of dimers.

It localises to the cytoplasm. The enzyme catalyses 3-amino-2-oxopropyl phosphate + 1-deoxy-D-xylulose 5-phosphate = pyridoxine 5'-phosphate + phosphate + 2 H2O + H(+). Its pathway is cofactor biosynthesis; pyridoxine 5'-phosphate biosynthesis; pyridoxine 5'-phosphate from D-erythrose 4-phosphate: step 5/5. Functionally, catalyzes the complicated ring closure reaction between the two acyclic compounds 1-deoxy-D-xylulose-5-phosphate (DXP) and 3-amino-2-oxopropyl phosphate (1-amino-acetone-3-phosphate or AAP) to form pyridoxine 5'-phosphate (PNP) and inorganic phosphate. The chain is Pyridoxine 5'-phosphate synthase from Xylella fastidiosa (strain M12).